The following is an 843-amino-acid chain: Aminopeptidase N (843 aa).

Substrate is bound by residues glutamate 120 and 252–256; that span reads GAMEN. Histidine 288 provides a ligand contact to Zn(2+). The active-site Proton acceptor is the glutamate 289. Zn(2+) contacts are provided by histidine 292 and glutamate 311.

Belongs to the peptidase M1 family. As to quaternary structure, monomer. The cofactor is Zn(2+).

It localises to the cytoplasm. It carries out the reaction Release of an N-terminal amino acid, Xaa-|-Yaa- from a peptide, amide or arylamide. Xaa is preferably Ala, but may be most amino acids including Pro (slow action). When a terminal hydrophobic residue is followed by a prolyl residue, the two may be released as an intact Xaa-Pro dipeptide.. In terms of biological role, aminopeptidase with broad substrate specificity to several peptides. The chain is Aminopeptidase N (pepN) from Lactobacillus delbrueckii subsp. lactis.